The primary structure comprises 283 residues: Diaminopimelate epimerase (283 aa).

Asparagine 11 and asparagine 65 together coordinate substrate. Cysteine 74 functions as the Proton donor in the catalytic mechanism. Residues 75–76, asparagine 163, asparagine 196, and 214–215 contribute to the substrate site; these read GN and ER. Cysteine 223 functions as the Proton acceptor in the catalytic mechanism. Substrate is bound at residue 224-225; sequence GT.

The protein belongs to the diaminopimelate epimerase family. In terms of assembly, homodimer.

The protein resides in the cytoplasm. The catalysed reaction is (2S,6S)-2,6-diaminopimelate = meso-2,6-diaminopimelate. It participates in amino-acid biosynthesis; L-lysine biosynthesis via DAP pathway; DL-2,6-diaminopimelate from LL-2,6-diaminopimelate: step 1/1. Its function is as follows. Catalyzes the stereoinversion of LL-2,6-diaminopimelate (L,L-DAP) to meso-diaminopimelate (meso-DAP), a precursor of L-lysine and an essential component of the bacterial peptidoglycan. The protein is Diaminopimelate epimerase of Desulfitobacterium hafniense (strain DSM 10664 / DCB-2).